A 385-amino-acid chain; its full sequence is Isocitrate dehydrogenase [NAD] subunit beta, mitochondrial (385 aa).

The N-terminal 33 residues, 1 to 33 (MAALSRVRWLTRALVAAPNPGAWRSLCTSTVAQ), are a transit peptide targeting the mitochondrion. Lys199 bears the N6-acetyllysine mark.

It belongs to the isocitrate and isopropylmalate dehydrogenases family. In terms of assembly, heterooligomer of subunits alpha (IDH3A), beta (IDH3B), and gamma (IDH3G) in the apparent ratio of 2:1:1. The heterodimer containing one IDH3A and one IDH3B subunit and the heterodimer containing one IDH3A and one IDH3G subunit assemble into a heterotetramer (which contains two subunits of IDH3A, one of IDH3B and one of IDH3G) and further into the heterooctamer. As to expression, isoform A is predominant in heart muscle; also found in brain, kidney and liver. Isoform B is present in kidney and liver.

It is found in the mitochondrion. With respect to regulation, the heterotetramer and the heterodimer composed of IDH3A and IDH3G subunits can be allosterically activated by citrate (CIT) or/and ADP, and the two activators can act independently or synergistically. The heterodimer composed of IDH3A and IDH3B subunits cannot be allosterically regulated and the allosteric regulation of the heterotetramer is through the IDH3G subunit and not the IDH3B subunit. The IDH3G subunit contains the allosteric site which consists of a CIT-binding site and an ADP-binding site, and the binding of CIT and ADP causes conformational changes at the allosteric site which are transmitted to the active site in the catalytic subunit (IDH3A) through a cascade of conformational changes at the heterodimer interface, leading to stabilization of the isocitrate-binding at the active site and thus activation of the enzyme. ATP can activate the heterotetramer and the heterodimer composed of IDH3A and IDH3G subunits at low concentrations but inhibits their activities at high concentrations, whereas ATP exhibits only inhibitory effect on the heterodimer composed of IDH3A and IDH3B subunits. Its function is as follows. Plays a structural role to facilitate the assembly and ensure the full activity of the enzyme catalyzing the decarboxylation of isocitrate (ICT) into alpha-ketoglutarate. The heterodimer composed of the alpha (IDH3A) and beta (IDH3B) subunits and the heterodimer composed of the alpha (IDH3A) and gamma (IDH3G) subunits, have considerable basal activity but the full activity of the heterotetramer (containing two subunits of IDH3A, one of IDH3B and one of IDH3G) requires the assembly and cooperative function of both heterodimers. The protein is Isocitrate dehydrogenase [NAD] subunit beta, mitochondrial (IDH3B) of Bos taurus (Bovine).